The primary structure comprises 159 residues: Transcriptional repressor NrdR (159 aa).

The segment at Cys-3–Cys-34 is a zinc-finger region. The region spanning Pro-49 to Asp-139 is the ATP-cone domain.

The protein belongs to the NrdR family. It depends on Zn(2+) as a cofactor.

Negatively regulates transcription of bacterial ribonucleotide reductase nrd genes and operons by binding to NrdR-boxes. The polypeptide is Transcriptional repressor NrdR (Syntrophus aciditrophicus (strain SB)).